The chain runs to 369 residues: Flagellar P-ring protein (369 aa).

A signal peptide spans methionine 1–alanine 23.

The protein belongs to the FlgI family. The basal body constitutes a major portion of the flagellar organelle and consists of four rings (L,P,S, and M) mounted on a central rod.

Its subcellular location is the periplasm. It is found in the bacterial flagellum basal body. Assembles around the rod to form the L-ring and probably protects the motor/basal body from shearing forces during rotation. This Pectobacterium carotovorum subsp. carotovorum (strain PC1) protein is Flagellar P-ring protein.